A 354-amino-acid chain; its full sequence is MSVSDARLAQIAARFAELEARLASGTLEGADFIAASRDYAELEPVARVAEEVREMRGELVSLAALDDPDMRELADEELARIRAELPEAEHRLAVAMLPRDSADARPAMLEIRAGTGGDEAALFAADLFRMYERYAAEQGWRVETISVNANDLGGYKEVVANVAGQGVFAKLKFESGVHRVQRVPVTESGGRIHTSAATVAVLPEPDEVDVAIEDKDLKIDIYRASGAGGQHVNTTDSAVRITHLPSGLVVTCQDERSQHKNKAKAMQVLRTRLYDMRREAAQGAEAEARKAMVGSGDRSERIRTYNFPQGRVTDHRINLTLHRLPEILEGPGLAELIDALIAEDQSKRLAAMDG.

Gln-230 carries the N5-methylglutamine modification.

This sequence belongs to the prokaryotic/mitochondrial release factor family. In terms of processing, methylated by PrmC. Methylation increases the termination efficiency of RF1.

The protein resides in the cytoplasm. Functionally, peptide chain release factor 1 directs the termination of translation in response to the peptide chain termination codons UAG and UAA. This Novosphingobium aromaticivorans (strain ATCC 700278 / DSM 12444 / CCUG 56034 / CIP 105152 / NBRC 16084 / F199) protein is Peptide chain release factor 1.